Reading from the N-terminus, the 164-residue chain is Lipoprotein signal peptidase (164 aa).

A run of 3 helical transmembrane segments spans residues 12–32, 70–90, and 93–113; these read FLWL…WIVA, WLFT…LKET, and QQVM…GNVF. Residues Asp-123 and Asp-141 contribute to the active site. Residues 133 to 153 traverse the membrane as a helical segment; that stretch reads YWPAFNVADSAICLGAFLLVI.

It belongs to the peptidase A8 family.

The protein resides in the cell inner membrane. The catalysed reaction is Release of signal peptides from bacterial membrane prolipoproteins. Hydrolyzes -Xaa-Yaa-Zaa-|-(S,diacylglyceryl)Cys-, in which Xaa is hydrophobic (preferably Leu), and Yaa (Ala or Ser) and Zaa (Gly or Ala) have small, neutral side chains.. It participates in protein modification; lipoprotein biosynthesis (signal peptide cleavage). Its function is as follows. This protein specifically catalyzes the removal of signal peptides from prolipoproteins. This is Lipoprotein signal peptidase from Pseudoalteromonas atlantica (strain T6c / ATCC BAA-1087).